Here is a 350-residue protein sequence, read N- to C-terminus: MHLLLAAAFGLLLLLPPPGAVASRKPTMCQRCRTLVDKFNQGMANTARKNFGGGNTAWEEKTLSKYEFSEIRLLEIMEGLCDSSDFECNQLLEQQEEQLEAWWQTLKKEHPNLFEWFCVHTLKACCLPGTYGPDCQECQGGSERPCSGNGYCSGDGSRQGDGSCQCHTGYKGPLCIDCTDGFFSLQRNETHSICSACDESCKTCSGPSNKDCIQCEVGWARVEDACVDVDECAAETSPCSDGQYCENVNGSYTCEDCDSTCVGCTGKGPANCKECIAGYTKESGQCTDIDECSLEEKACKRKNENCYNVPGSFVCVCPEGFEETEDACVQTAEGKVTEENPTQPPSREDL.

Positions 1–22 (MHLLLAAAFGLLLLLPPPGAVA) are cleaved as a signal peptide. The short motif at 29-32 (CQRC) is the CXXC element. Intrachain disulfides connect Cys29–Cys32, Cys138–Cys152, Cys146–Cys164, and Cys166–Cys175. The EGF-like 1 domain occupies 134–176 (DCQECQGGSERPCSGNGYCSGDGSRQGDGSCQCHTGYKGPLCI). The stretch at 191-238 (HSICSACDESCKTCSGPSNKDCIQCEVGWARVEDACVDVDECAAETSP) is one FU 1 repeat. Residue Asn249 is glycosylated (N-linked (GlcNAc...) asparagine). The FU 2 repeat unit spans residues 251–298 (SYTCEDCDSTCVGCTGKGPANCKECIAGYTKESGQCTDIDECSLEEKA). Positions 261 to 264 (CVGC) match the CXXC motif. 4 disulfides stabilise this stretch: Cys261-Cys264, Cys292-Cys306, Cys299-Cys315, and Cys317-Cys328. The region spanning 288-329 (DIDECSLEEKACKRKNENCYNVPGSFVCVCPEGFEETEDACV) is the EGF-like 2; calcium-binding domain.

This sequence belongs to the CRELD family. Interacts with CHRNA4. Component of a complex containing at least CRELD2, MANF, MATN3 and PDIA4. In terms of tissue distribution, expressed in chondrocytes (at protein level).

The protein resides in the endoplasmic reticulum. It carries out the reaction Catalyzes the rearrangement of -S-S- bonds in proteins.. Functionally, protein disulfide isomerase. Might play a role in the unfolded protein response. May regulate transport of alpha4-beta2 neuronal acetylcholine receptor. This Mus musculus (Mouse) protein is Protein disulfide isomerase Creld2 (Creld2).